The chain runs to 686 residues: Forkhead box protein P1 (686 aa).

Composition is skewed to polar residues over residues M1–G19 and I279–V292. Disordered stretches follow at residues M1–G23 and I279–S306. Over residues P295–S306 the composition is skewed to basic and acidic residues. The C2H2-type zinc-finger motif lies at G315 to H340. The leucine-zipper stretch occupies residues V357–L378. A CTBP1-binding region spans residues P391–V395. Residues T403–L412 are compositionally biased toward polar residues. Positions T403–N440 are disordered. Positions P413–T427 are enriched in low complexity. The segment covering Q428 to H439 has biased composition (polar residues). Positions R474–L564 form a DNA-binding region, fork-head. The tract at residues M619 to E686 is disordered. Polar residues predominate over residues H621–G632. Residues Y676–E686 are compositionally biased toward acidic residues.

Its subcellular location is the nucleus. Functionally, transcriptional repressor. This is Forkhead box protein P1 (FOXP1) from Gallus gallus (Chicken).